A 366-amino-acid polypeptide reads, in one-letter code: Isopentenyl-diphosphate delta-isomerase (366 aa).

6 to 7 (RK) is a binding site for substrate. FMN is bound by residues Thr-63, 64–66 (GMT), Ser-94, and Asn-123. Position 94–96 (94–96 (SQR)) interacts with substrate. Residue Gln-158 participates in substrate binding. Glu-159 contributes to the Mg(2+) binding site. Residues Lys-191, Ser-216, Thr-221, 273–275 (GIR), and 294–295 (AN) each bind FMN.

Belongs to the IPP isomerase type 2 family. As to quaternary structure, homooctamer. Dimer of tetramers. It depends on FMN as a cofactor. NADPH is required as a cofactor. The cofactor is Mg(2+).

It is found in the cytoplasm. It catalyses the reaction isopentenyl diphosphate = dimethylallyl diphosphate. Involved in the biosynthesis of isoprenoids. Catalyzes the 1,3-allylic rearrangement of the homoallylic substrate isopentenyl (IPP) to its allylic isomer, dimethylallyl diphosphate (DMAPP). This chain is Isopentenyl-diphosphate delta-isomerase, found in Metallosphaera sedula (strain ATCC 51363 / DSM 5348 / JCM 9185 / NBRC 15509 / TH2).